Consider the following 260-residue polypeptide: 4-hydroxy-tetrahydrodipicolinate reductase (260 aa).

NAD(+) contacts are provided by residues 8–13, glutamate 35, 91–93, and 115–118; these read GAAGRM, GTT, and APNM. Histidine 148 acts as the Proton donor/acceptor in catalysis. Residue histidine 149 participates in (S)-2,3,4,5-tetrahydrodipicolinate binding. Catalysis depends on lysine 152, which acts as the Proton donor. Residue 158-159 coordinates (S)-2,3,4,5-tetrahydrodipicolinate; the sequence is GT.

The protein belongs to the DapB family.

It localises to the cytoplasm. It carries out the reaction (S)-2,3,4,5-tetrahydrodipicolinate + NAD(+) + H2O = (2S,4S)-4-hydroxy-2,3,4,5-tetrahydrodipicolinate + NADH + H(+). The enzyme catalyses (S)-2,3,4,5-tetrahydrodipicolinate + NADP(+) + H2O = (2S,4S)-4-hydroxy-2,3,4,5-tetrahydrodipicolinate + NADPH + H(+). It participates in amino-acid biosynthesis; L-lysine biosynthesis via DAP pathway; (S)-tetrahydrodipicolinate from L-aspartate: step 4/4. Its function is as follows. Catalyzes the conversion of 4-hydroxy-tetrahydrodipicolinate (HTPA) to tetrahydrodipicolinate. This Rubrobacter xylanophilus (strain DSM 9941 / JCM 11954 / NBRC 16129 / PRD-1) protein is 4-hydroxy-tetrahydrodipicolinate reductase.